A 207-amino-acid polypeptide reads, in one-letter code: Ribosomal RNA large subunit methyltransferase E (207 aa).

Residues Gly-60, Trp-62, Asp-80, Asp-96, and Asp-121 each coordinate S-adenosyl-L-methionine. Lys-161 serves as the catalytic Proton acceptor.

It belongs to the class I-like SAM-binding methyltransferase superfamily. RNA methyltransferase RlmE family.

The protein localises to the cytoplasm. It catalyses the reaction uridine(2552) in 23S rRNA + S-adenosyl-L-methionine = 2'-O-methyluridine(2552) in 23S rRNA + S-adenosyl-L-homocysteine + H(+). Its function is as follows. Specifically methylates the uridine in position 2552 of 23S rRNA at the 2'-O position of the ribose in the fully assembled 50S ribosomal subunit. The sequence is that of Ribosomal RNA large subunit methyltransferase E from Methylobacillus flagellatus (strain ATCC 51484 / DSM 6875 / VKM B-1610 / KT).